The chain runs to 124 residues: Small ribosomal subunit protein uS12 (124 aa).

The segment at 1–32 is disordered; it reads MPTINQLVRKGRRDKTAKVKTAALKGSPQRRG. Residue aspartate 89 is modified to 3-methylthioaspartic acid. The interval 104-124 is disordered; it reads TQGVKGRKQARSRYGAKKEKS. A compositionally biased stretch (basic residues) spans 108-118; sequence KGRKQARSRYG.

The protein belongs to the universal ribosomal protein uS12 family. As to quaternary structure, part of the 30S ribosomal subunit. Contacts proteins S8 and S17. May interact with IF1 in the 30S initiation complex.

Functionally, with S4 and S5 plays an important role in translational accuracy. In terms of biological role, interacts with and stabilizes bases of the 16S rRNA that are involved in tRNA selection in the A site and with the mRNA backbone. Located at the interface of the 30S and 50S subunits, it traverses the body of the 30S subunit contacting proteins on the other side and probably holding the rRNA structure together. The combined cluster of proteins S8, S12 and S17 appears to hold together the shoulder and platform of the 30S subunit. In Rhodococcus erythropolis (strain PR4 / NBRC 100887), this protein is Small ribosomal subunit protein uS12.